Consider the following 709-residue polypeptide: Polyribonucleotide nucleotidyltransferase (709 aa).

Residues Asp-485 and Asp-491 each coordinate Mg(2+). In terms of domain architecture, KH spans 552–611 (PRIHTMKIDPKKIKDVIGKGGATIRALTEETGTSIDIDDDGTVKIAATDNNAAKRVMERI). One can recognise an S1 motif domain in the interval 621–689 (NAIYKGKVTR…RQGRIRLTMK (69 aa)).

Belongs to the polyribonucleotide nucleotidyltransferase family. As to quaternary structure, component of the RNA degradosome, which is a multiprotein complex involved in RNA processing and mRNA degradation. The cofactor is Mg(2+).

It is found in the cytoplasm. It catalyses the reaction RNA(n+1) + phosphate = RNA(n) + a ribonucleoside 5'-diphosphate. Involved in mRNA degradation. Catalyzes the phosphorolysis of single-stranded polyribonucleotides processively in the 3'- to 5'-direction. The sequence is that of Polyribonucleotide nucleotidyltransferase from Glaesserella parasuis serovar 5 (strain SH0165) (Haemophilus parasuis).